We begin with the raw amino-acid sequence, 501 residues long: L-ornithine N(5)-monooxygenase (501 aa).

Low complexity predominate over residues methionine 1–asparagine 16. The disordered stretch occupies residues methionine 1–proline 40. The span at proline 26–glutamine 37 shows a compositional bias: polar residues. FAD-binding positions include glutamate 92–histidine 100 and glutamine 111. Substrate is bound at residue lysine 116. Valine 177 lines the FAD pocket. Serine 263–serine 266 contributes to the NADP(+) binding site. Residues asparagine 304–phenylalanine 307 and asparagine 334 contribute to the substrate site. Asparagine 334–serine 336 lines the NADP(+) pocket. An FAD-binding site is contributed by serine 476–leucine 478. Residue serine 479 coordinates substrate.

The protein belongs to the lysine N(6)-hydroxylase/L-ornithine N(5)-oxygenase family. As to quaternary structure, homotetramer. FAD serves as cofactor.

It catalyses the reaction L-ornithine + NADPH + O2 = N(5)-hydroxy-L-ornithine + NADP(+) + H2O. It carries out the reaction L-ornithine + NADH + O2 = N(5)-hydroxy-L-ornithine + NAD(+) + H2O. Its pathway is siderophore biosynthesis. L-ornithine N(5)-monooxygenase; part of the siderophore biosynthetic pathway. Arthroderma benhamiae produces 2 types of extracellular siderophores, ferrichrome C and ferricrocin. The biosynthesis of these siderophores depends on the hydroxylation of ornithine to N(5)-hydroxyornithine, catalyzed by the monooxygenase sidA. The structure of ferricrocin differs from ferrichrome C only by a serine for alanine substitution and the assembly of both siderophores is suggested to be performed by the nonribosomal peptide synthase (NRPS) sidC. This Arthroderma benhamiae (strain ATCC MYA-4681 / CBS 112371) (Trichophyton mentagrophytes) protein is L-ornithine N(5)-monooxygenase.